The primary structure comprises 686 residues: Bromodomain-containing factor 1 (686 aa).

2 disordered regions span residues 1 to 69 (MTDI…PAGL) and 85 to 150 (NGYN…NPIP). Residues 9 to 25 (NDVDVNGNNVNDDVSSN) are compositionally biased toward low complexity. Residues 99–120 (QGLKKEEGGQGTKQEDLDENSK) are compositionally biased toward basic and acidic residues. Pro residues predominate over residues 130 to 139 (EPAPAPPPEP). Residues 145 to 254 (PQNPIPKHQQ…ASFEKHMLNM (110 aa)) enclose the Bromo 1 domain. S270 bears the Phosphoserine mark. The tract at residues 283–304 (QTHNGRPKRTIHPPKSKDIYPY) is disordered. Residues 287–296 (GRPKRTIHPP) are compositionally biased toward basic residues. In terms of domain architecture, Bromo 2 spans 312-421 (KRLQQAMKFC…EVFNSKWADR (110 aa)). 4 disordered regions span residues 424–447 (LDDY…SEYS), 486–523 (IRKE…KKNK), 594–636 (SSGA…EQSR), and 649–686 (DSAS…SEEE). S429 is subject to Phosphoserine. Acidic residues predominate over residues 438 to 447 (DYDDYESEYS). A coiled-coil region spans residues 460 to 499 (AIQYLEEQLARMKVELQQLKKQELEKIRKERRLARGSKKR). Residues 488–507 (KERRLARGSKKRGKRSKGRS) show a composition bias toward basic residues. Residues 518–598 (RDKKNKLKTV…RQYESSSGAS (81 aa)) form the NET domain. Polar residues-rich tracts occupy residues 594–620 (SSGA…TSAG) and 652–671 (SPLS…HNGF). Phosphoserine is present on residues S615 and S659. The span at 675 to 686 (SDDDVSSESEEE) shows a compositional bias: acidic residues.

This sequence belongs to the BET family. In terms of assembly, interacts with the TFIID subunit TAF7 and with acetylated histones H3 and H4. Phosphorylated by the casein kinase CK2 complex.

The protein resides in the nucleus. In terms of biological role, transcription factor involved in the expression of a broad class of genes including snRNAs. Required for sporulation and DNA-damage repair. Prevents the spreading of SIR silencing at telomeres and protects histone H4, but not H3, from deacetylation. The chain is Bromodomain-containing factor 1 (BDF1) from Saccharomyces cerevisiae (strain ATCC 204508 / S288c) (Baker's yeast).